The chain runs to 113 residues: Beta-defensin 112 (113 aa).

Intrachain disulfides connect Cys-54-Cys-82, Cys-61-Cys-75, and Cys-65-Cys-83.

It belongs to the beta-defensin family.

The protein resides in the secreted. Has antibacterial activity. This is Beta-defensin 112 (DEFB112) from Homo sapiens (Human).